Consider the following 259-residue polypeptide: Type-2Aa cytolytic delta-endotoxin (259 aa).

The protein belongs to the cyt1/cyt2 endotoxin family. In terms of assembly, homodimer (protoxin) and monomer (active toxin). Active after proteolytic processing.

In terms of biological role, kills the larvae of dipteran insects by making pores in the epithelial cell membrane of the insect midgut. This chain is Type-2Aa cytolytic delta-endotoxin (cyt2Aa1), found in Bacillus thuringiensis subsp. kyushuensis.